A 387-amino-acid chain; its full sequence is Succinyl-diaminopimelate desuccinylase (387 aa).

H73 provides a ligand contact to Zn(2+). D75 is an active-site residue. D106 is a Zn(2+) binding site. Residue E141 is the Proton acceptor of the active site. Residues E142, E170, and H359 each coordinate Zn(2+).

This sequence belongs to the peptidase M20A family. DapE subfamily. In terms of assembly, homodimer. It depends on Zn(2+) as a cofactor. Requires Co(2+) as cofactor.

The catalysed reaction is N-succinyl-(2S,6S)-2,6-diaminopimelate + H2O = (2S,6S)-2,6-diaminopimelate + succinate. It functions in the pathway amino-acid biosynthesis; L-lysine biosynthesis via DAP pathway; LL-2,6-diaminopimelate from (S)-tetrahydrodipicolinate (succinylase route): step 3/3. Functionally, catalyzes the hydrolysis of N-succinyl-L,L-diaminopimelic acid (SDAP), forming succinate and LL-2,6-diaminopimelate (DAP), an intermediate involved in the bacterial biosynthesis of lysine and meso-diaminopimelic acid, an essential component of bacterial cell walls. This Methylorubrum populi (strain ATCC BAA-705 / NCIMB 13946 / BJ001) (Methylobacterium populi) protein is Succinyl-diaminopimelate desuccinylase.